Consider the following 191-residue polypeptide: Large ribosomal subunit protein eL6 (191 aa).

The protein belongs to the eukaryotic ribosomal protein eL6 family.

The sequence is that of Large ribosomal subunit protein eL6 (RPL6) from Tetrahymena thermophila (strain SB210).